Reading from the N-terminus, the 332-residue chain is 5-dehydro-2-deoxygluconokinase (332 aa).

It belongs to the carbohydrate kinase PfkB family.

It catalyses the reaction 5-dehydro-2-deoxy-D-gluconate + ATP = 6-phospho-5-dehydro-2-deoxy-D-gluconate + ADP + H(+). The protein operates within polyol metabolism; myo-inositol degradation into acetyl-CoA; acetyl-CoA from myo-inositol: step 5/7. In terms of biological role, catalyzes the phosphorylation of 5-dehydro-2-deoxy-D-gluconate (2-deoxy-5-keto-D-gluconate or DKG) to 6-phospho-5-dehydro-2-deoxy-D-gluconate (DKGP). The protein is 5-dehydro-2-deoxygluconokinase of Bacillus anthracis (strain A0248).